Reading from the N-terminus, the 243-residue chain is Carboxy-S-adenosyl-L-methionine synthase (243 aa).

Residues tyrosine 40, 65–67, 90–91, 118–119, asparagine 133, and arginine 200 each bind S-adenosyl-L-methionine; these read GCS, DN, and DI.

It belongs to the class I-like SAM-binding methyltransferase superfamily. Cx-SAM synthase family. As to quaternary structure, homodimer.

It catalyses the reaction prephenate + S-adenosyl-L-methionine = carboxy-S-adenosyl-L-methionine + 3-phenylpyruvate + H2O. Catalyzes the conversion of S-adenosyl-L-methionine (SAM) to carboxy-S-adenosyl-L-methionine (Cx-SAM). This is Carboxy-S-adenosyl-L-methionine synthase from Shewanella piezotolerans (strain WP3 / JCM 13877).